We begin with the raw amino-acid sequence, 320 residues long: Lipoyl synthase (320 aa).

The tract at residues 1–29 (MVTVVDRVTNRRLRHPEKAHRPDTSVQKK) is disordered. The span at 19–29 (AHRPDTSVQKK) shows a compositional bias: basic and acidic residues. 7 residues coordinate [4Fe-4S] cluster: Cys59, Cys64, Cys70, Cys85, Cys89, Cys92, and Ser298. A Radical SAM core domain is found at 71–287 (WSQRHASFMI…AKIGKVKGFL (217 aa)).

It belongs to the radical SAM superfamily. Lipoyl synthase family. [4Fe-4S] cluster serves as cofactor.

The protein resides in the cytoplasm. The catalysed reaction is [[Fe-S] cluster scaffold protein carrying a second [4Fe-4S](2+) cluster] + N(6)-octanoyl-L-lysyl-[protein] + 2 oxidized [2Fe-2S]-[ferredoxin] + 2 S-adenosyl-L-methionine + 4 H(+) = [[Fe-S] cluster scaffold protein] + N(6)-[(R)-dihydrolipoyl]-L-lysyl-[protein] + 4 Fe(3+) + 2 hydrogen sulfide + 2 5'-deoxyadenosine + 2 L-methionine + 2 reduced [2Fe-2S]-[ferredoxin]. It functions in the pathway protein modification; protein lipoylation via endogenous pathway; protein N(6)-(lipoyl)lysine from octanoyl-[acyl-carrier-protein]: step 2/2. Functionally, catalyzes the radical-mediated insertion of two sulfur atoms into the C-6 and C-8 positions of the octanoyl moiety bound to the lipoyl domains of lipoate-dependent enzymes, thereby converting the octanoylated domains into lipoylated derivatives. The protein is Lipoyl synthase of Bartonella tribocorum (strain CIP 105476 / IBS 506).